Consider the following 251-residue polypeptide: Orcokinin peptides type A (251 aa).

A signal peptide spans 1–20; it reads MTAQMFTIALLLSLSAIAAA. 3 consecutive propeptides follow at residues 21–46, 225–231, and 249–251; these read GTIK…GAPV, DYDVFPD, and NVE.

The protein belongs to the orcokinin family.

It is found in the secreted. Its function is as follows. Myotropic peptides that enhance both the frequency and amplitude of spontaneous hindgut contractions. This chain is Orcokinin peptides type A, found in Procambarus clarkii (Red swamp crayfish).